Reading from the N-terminus, the 584-residue chain is Inactive metallocarboxypeptidase ECM14 (584 aa).

The signal sequence occupies residues 1 to 20 (MHLLPVITAVALIYTPLASA). The propeptide occupies 21–174 (VPSSSNPQFP…QAVYESYPQP (154 aa)). The region spanning 202–524 (DYQPLSVMTP…NAVLEFGKFL (323 aa)) is the Peptidase M14 domain. H267 and E270 together coordinate Zn(2+). Substrate contacts are provided by residues 267 to 270 (HARE), R325, and 342 to 343 (DR). C336 and C359 are disulfide-bonded. N383 and N389 each carry an N-linked (GlcNAc...) asparagine glycan. H399 contributes to the Zn(2+) binding site. 400–401 (SY) contacts substrate. Positions 564–584 (QQLDDEDGEADSHWVLRTQRS) are disordered.

Belongs to the peptidase M14 family. Zn(2+) serves as cofactor.

It is found in the vacuole. The protein localises to the secreted. Functionally, inactive carboxypeptidase that may play a role in cell wall organization and biogenesis. The protein is Inactive metallocarboxypeptidase ECM14 (ECM14) of Uncinocarpus reesii (strain UAMH 1704).